The sequence spans 300 residues: 2-oxoglutarate-dependent dioxygenase DAO (300 aa).

A Fe2OG dioxygenase domain is found at 149–252 (WPCQFRMNRY…VSIAMFLLAP (104 aa)). H173, D175, and H232 together coordinate Fe cation. R242 is a binding site for 2-oxoglutarate.

The protein belongs to the iron/ascorbate-dependent oxidoreductase family. Fe(2+) is required as a cofactor.

2-oxoglutarate-dependent dioxygenase essential for auxin catabolism and maintenance of auxin homeostasis in reproductive organs. Catalyzes the irreversible oxidation of indole-3-acetic acid (IAA) to the biologically inactive 2-oxoindole-3-acetic acid (OxIAA). This is 2-oxoglutarate-dependent dioxygenase DAO (DAO) from Oryza sativa subsp. indica (Rice).